A 79-amino-acid polypeptide reads, in one-letter code: Sulfur carrier protein TusA (79 aa).

Catalysis depends on Cys17, which acts as the Cysteine persulfide intermediate.

This sequence belongs to the sulfur carrier protein TusA family.

The protein localises to the cytoplasm. In terms of biological role, sulfur carrier protein which probably makes part of a sulfur-relay system. The sequence is that of Sulfur carrier protein TusA from Mannheimia succiniciproducens (strain KCTC 0769BP / MBEL55E).